A 43-amino-acid polypeptide reads, in one-letter code: Hemolysin H1U (43 aa).

Position 1 is an N-formylmethionine (Met1).

This sequence belongs to the staphylococcal hemolytic protein family.

The protein localises to the secreted. In terms of biological role, virulence factor. Causes hemolysis of erythrocytes. Acts synergistically with beta-hemolysins from S.aureus ATCC 25923. Cytotoxic towards human dermal fibroblasts. In Staphylococcus ureilyticus (Staphylococcus cohnii subsp. urealyticus), this protein is Hemolysin H1U.